The chain runs to 308 residues: Protein FdhE homolog (308 aa).

It belongs to the FdhE family.

The protein resides in the cytoplasm. Functionally, necessary for formate dehydrogenase activity. The polypeptide is Protein FdhE homolog (Edwardsiella ictaluri (strain 93-146)).